The sequence spans 126 residues: Large ribosomal subunit protein eL8 (126 aa).

It belongs to the eukaryotic ribosomal protein eL8 family. As to quaternary structure, part of the 50S ribosomal subunit. Probably part of the RNase P complex.

It is found in the cytoplasm. Multifunctional RNA-binding protein that recognizes the K-turn motif in ribosomal RNA, the RNA component of RNase P, box H/ACA, box C/D and box C'/D' sRNAs. In Cenarchaeum symbiosum (strain A), this protein is Large ribosomal subunit protein eL8.